The primary structure comprises 1241 residues: ATP-dependent helicase/nuclease subunit A (1241 aa).

The region spanning 12 to 485 (SQWTDDQWKA…IDLAKNFRSR (474 aa)) is the UvrD-like helicase ATP-binding domain. 33–40 (AAAGSGKT) provides a ligand contact to ATP. One can recognise a UvrD-like helicase C-terminal domain in the interval 505–805 (GEIDYDADAE…RIMTIHKSKG (301 aa)).

Belongs to the helicase family. AddA subfamily. Heterodimer of AddA and AddB/RexB. The cofactor is Mg(2+).

It carries out the reaction Couples ATP hydrolysis with the unwinding of duplex DNA by translocating in the 3'-5' direction.. The enzyme catalyses ATP + H2O = ADP + phosphate + H(+). In terms of biological role, the heterodimer acts as both an ATP-dependent DNA helicase and an ATP-dependent, dual-direction single-stranded exonuclease. Recognizes the chi site generating a DNA molecule suitable for the initiation of homologous recombination. The AddA nuclease domain is required for chi fragment generation; this subunit has the helicase and 3' -&gt; 5' nuclease activities. The protein is ATP-dependent helicase/nuclease subunit A of Bacillus cereus (strain G9842).